Consider the following 657-residue polypeptide: Protein mono-ADP-ribosyltransferase TIPARP (657 aa).

Positions 1–10 (MEMETTEPEP) are enriched in acidic residues. The interval 1-21 (MEMETTEPEPDCVVQPPSPPD) is disordered. At cysteine 39 the chain carries ADP-ribosylcysteine. Positions 41–47 (KKKDQKR) match the Nuclear localization signal motif. The C3H1-type zinc finger occupies 237–264 (ENGIEICMDFLQGTCIYGRDCLKHHTVL). A WWE domain is found at 332 to 410 (STPPSSNVNS…RRPLFRSCFI (79 aa)). A PARP catalytic domain is found at 449–657 (YPETWVYMHP…YEEVSNTVSI (209 aa)).

The protein belongs to the ARTD/PARP family. In terms of assembly, interacts with AHR. In terms of processing, auto-mono-ADP-ribosylated.

It is found in the nucleus. The enzyme catalyses L-aspartyl-[protein] + NAD(+) = 4-O-(ADP-D-ribosyl)-L-aspartyl-[protein] + nicotinamide. It catalyses the reaction L-glutamyl-[protein] + NAD(+) = 5-O-(ADP-D-ribosyl)-L-glutamyl-[protein] + nicotinamide. It carries out the reaction L-cysteinyl-[protein] + NAD(+) = S-(ADP-D-ribosyl)-L-cysteinyl-[protein] + nicotinamide + H(+). Its activity is regulated as follows. ADP-ribosyltransferase activity is inhibited by PJ34; inhibition is however not specific to TIPARP and other PARP-domain containing proteins are also inhibited by PJ34. Partially inhibited by KU0058948. ADP-ribosyltransferase that mediates mono-ADP-ribosylation of glutamate, aspartate and cysteine residues on target proteins. Acts as a negative regulator of AHR by mediating mono-ADP-ribosylation of AHR, leading to inhibit transcription activator activity of AHR. The sequence is that of Protein mono-ADP-ribosyltransferase TIPARP from Homo sapiens (Human).